The sequence spans 156 residues: UPF0587 protein (156 aa).

C32, C35, C64, and C67 together coordinate Zn(2+).

Belongs to the UPF0587 family.

This chain is UPF0587 protein, found in Dictyostelium discoideum (Social amoeba).